The chain runs to 100 residues: MDQFLVQIFAVIHQIPKGKVSTYGEIAKMAGYPGYARHVGKALGNLPEGSKLPWFRVINSQGKISLKGRDLDRQKQKLEAEGIEVSEIGKIALRKYKWQP.

The protein belongs to the MGMT family. ATL subfamily.

In terms of biological role, involved in DNA damage recognition. Binds DNA containing O(6)-methylguanine. Binds to the damaged base and flips the base out of the DNA duplex into an extrahelical conformation, which allows processing by repair proteins. The sequence is that of DNA base-flipping protein from Vibrio parahaemolyticus serotype O3:K6 (strain AQ3810).